Reading from the N-terminus, the 624-residue chain is Translocator protein BipB (624 aa).

Residues 54-99 (LASEQCDAQPVTDDARLDRLDDKPALRAPRSDAAHAADGNARGNGG) are disordered. Basic and acidic residues predominate over residues 66–88 (DDARLDRLDDKPALRAPRSDAAH). Residues 313-343 (EMQAKREAELQKKSDEYQEQVKKAEEMQKTM) adopt a coiled-coil conformation. 3 helical membrane passes run 359–379 (FAAA…GLAL), 405–425 (AILK…LVAC), and 434–454 (LAGA…AAFV).

It belongs to the SctE/SipB/YopB family.

Its subcellular location is the secreted. The protein localises to the host membrane. Its function is as follows. Plays a role in the bacterium-induced formation of multinucleated giant cell (MNGC), which is formed after host cell fusion, as well as in the intercellular spreading of bacteria and in the induction of apoptosis in macrophages. May act in concert with other effector proteins to induce fusion of host cell membranes. The chain is Translocator protein BipB (bipB) from Burkholderia thailandensis (strain ATCC 700388 / DSM 13276 / CCUG 48851 / CIP 106301 / E264).